A 736-amino-acid polypeptide reads, in one-letter code: Oxysterol-binding protein-related protein 9 (736 aa).

Ala2 bears the N-acetylalanine mark. Positions Ala2–Leu99 constitute a PH domain. Residues Lys231–Ser367 are disordered. A compositionally biased stretch (low complexity) spans Thr253–Ser290. A phosphoserine mark is found at Ser306, Ser324, Ser325, Ser326, and Ser329. 2 stretches are compositionally biased toward polar residues: residues Ser314 to Ser329 and Thr336 to Thr347. Ser611 carries the phosphoserine modification.

This sequence belongs to the OSBP family. As to quaternary structure, heterodimer with OSBPL11. Interacts with OSBPL10. In terms of tissue distribution, widely expressed.

Its subcellular location is the late endosome membrane. The protein resides in the golgi apparatus. It is found in the trans-Golgi network membrane. The enzyme catalyses a 1,2-diacyl-sn-glycero-3-phospho-(1D-myo-inositol 4-phosphate)(out) + a 1,2-diacyl-sn-glycero-3-phospho-L-serine(in) = a 1,2-diacyl-sn-glycero-3-phospho-(1D-myo-inositol 4-phosphate)(in) + a 1,2-diacyl-sn-glycero-3-phospho-L-serine(out). In terms of biological role, interacts with OSBPL11 to function as lipid transfer proteins. Together they form a heterodimer that localizes at the ER-trans-Golgi membrane contact sites, and exchanges phosphatidylserine (1,2-diacyl-sn-glycero-3-phospho-L-serine, PS) for phosphatidylinositol-4-phosphate (1,2-diacyl-sn-glycero-3-phospho-(1D-myo-inositol 4-phosphate), PI(4)P) between the two organelles, a step that is critical for sphingomyelin synthesis in the Golgi complex. In Homo sapiens (Human), this protein is Oxysterol-binding protein-related protein 9 (OSBPL9).